Consider the following 396-residue polypeptide: Lysophospholipid transporter LplT (396 aa).

Over 1-17 (MSESVHTNTSLWSKGMK) the chain is Periplasmic. The helical transmembrane segment at 18-38 (AVIVAQFLSAFGDNALLFATL) threads the bilayer. Topologically, residues 39–52 (ALLKAQFYPEWSQP) are cytoplasmic. A helical membrane pass occupies residues 53 to 73 (ILQMVFVGAYILLAPFVGQVA). At 74–90 (DSFAKGRVMMFANGLKL) the chain is on the periplasmic side. The helical transmembrane segment at 91–111 (LGAASICFGINPFLGYTLVGV) threads the bilayer. The Cytoplasmic segment spans residues 112–144 (GAAAYSPAKYGILGELTTGSKLVKANGLMEASA). The helical transmembrane segment at 145 to 165 (IAAILLGSVAGGVLADWHVLV) threads the bilayer. Position 166 (Ala-166) is a topological domain, periplasmic. A helical membrane pass occupies residues 167–187 (LAACALAYGGAVVANIYIPKL). The Cytoplasmic portion of the chain corresponds to 188 to 225 (AARPGQSWNLINMTRSFLNACTSLWCNGETRFSLVGAS). Residues 226–246 (LFWGAGVTLRFLLVLWVPVAL) traverse the membrane as a helical segment. Topologically, residues 247–255 (GITDNATPT) are periplasmic. The chain crosses the membrane as a helical span at residues 256-276 (YLNAMVAIGIVVGAGAAAKLV). Residues 277 to 279 (TLE) are Cytoplasmic-facing. A helical membrane pass occupies residues 280–300 (TVSRCMPAGILIGVVVLIFSL). The Periplasmic portion of the chain corresponds to 301 to 303 (QHE). Residues 304-324 (LLPAYALLMLIGVLGGFFVVP) form a helical membrane-spanning segment. Residues 325 to 342 (LNALLQERGKKSVGAGNA) are Cytoplasmic-facing. A helical transmembrane segment spans residues 343-363 (IAVQNLGENSAMLLMLGIYSL). Residues 364-365 (AV) are Periplasmic-facing. The helical transmembrane segment at 366-386 (MVGIPVVPIGIGFGALFALAI) threads the bilayer. Topologically, residues 387–396 (TALWIWQRRH) are cytoplasmic.

The protein belongs to the major facilitator superfamily. LplT (TC 2.A.1.42) family.

The protein localises to the cell inner membrane. Its function is as follows. Catalyzes the facilitated diffusion of 2-acyl-glycero-3-phosphoethanolamine (2-acyl-GPE) into the cell. The polypeptide is Lysophospholipid transporter LplT (Shigella flexneri serotype 5b (strain 8401)).